The sequence spans 251 residues: Coproheme decarboxylase (251 aa).

Fe-coproporphyrin III-binding positions include Arg-133, 147–151 (YPMSK), His-174, Gln-187, and Ser-225. Tyr-147 is a catalytic residue.

Belongs to the ChdC family. Type 1 subfamily. Fe-coproporphyrin III is required as a cofactor.

It carries out the reaction Fe-coproporphyrin III + 2 H2O2 + 2 H(+) = heme b + 2 CO2 + 4 H2O. It catalyses the reaction Fe-coproporphyrin III + H2O2 + H(+) = harderoheme III + CO2 + 2 H2O. The catalysed reaction is harderoheme III + H2O2 + H(+) = heme b + CO2 + 2 H2O. The protein operates within porphyrin-containing compound metabolism; protoheme biosynthesis. Involved in coproporphyrin-dependent heme b biosynthesis. Catalyzes the decarboxylation of Fe-coproporphyrin III (coproheme) to heme b (protoheme IX), the last step of the pathway. The reaction occurs in a stepwise manner with a three-propionate intermediate. This chain is Coproheme decarboxylase, found in Listeria welshimeri serovar 6b (strain ATCC 35897 / DSM 20650 / CCUG 15529 / CIP 8149 / NCTC 11857 / SLCC 5334 / V8).